The primary structure comprises 150 residues: Large ribosomal subunit protein bL9 (150 aa).

The protein belongs to the bacterial ribosomal protein bL9 family.

In terms of biological role, binds to the 23S rRNA. This chain is Large ribosomal subunit protein bL9, found in Halorhodospira halophila (strain DSM 244 / SL1) (Ectothiorhodospira halophila (strain DSM 244 / SL1)).